The primary structure comprises 365 residues: Carbamoyl phosphate synthase small chain (365 aa).

CPSase stretches follow at residues 1–166 (MKRQ…PSPG) and 1–169 (MKRQ…GRGH). L-glutamine-binding residues include S45, G218, and G220. The 188-residue stretch at 170–357 (RVVLVDFGMK…LTMIENFKKE (188 aa)) folds into the Glutamine amidotransferase type-1 domain. C245 functions as the Nucleophile in the catalytic mechanism. L-glutamine-binding residues include L246, Q249, N287, G289, and Y290. Active-site residues include H330 and E332.

Belongs to the CarA family. As to quaternary structure, composed of two chains; the small (or glutamine) chain promotes the hydrolysis of glutamine to ammonia, which is used by the large (or ammonia) chain to synthesize carbamoyl phosphate. Tetramer of heterodimers (alpha,beta)4.

It catalyses the reaction hydrogencarbonate + L-glutamine + 2 ATP + H2O = carbamoyl phosphate + L-glutamate + 2 ADP + phosphate + 2 H(+). The catalysed reaction is L-glutamine + H2O = L-glutamate + NH4(+). Its pathway is amino-acid biosynthesis; L-arginine biosynthesis; carbamoyl phosphate from bicarbonate: step 1/1. It participates in pyrimidine metabolism; UMP biosynthesis via de novo pathway; (S)-dihydroorotate from bicarbonate: step 1/3. Small subunit of the glutamine-dependent carbamoyl phosphate synthetase (CPSase). CPSase catalyzes the formation of carbamoyl phosphate from the ammonia moiety of glutamine, carbonate, and phosphate donated by ATP, constituting the first step of 2 biosynthetic pathways, one leading to arginine and/or urea and the other to pyrimidine nucleotides. The small subunit (glutamine amidotransferase) binds and cleaves glutamine to supply the large subunit with the substrate ammonia. The sequence is that of Carbamoyl phosphate synthase small chain from Bacillus anthracis.